The following is a 384-amino-acid chain: Guanine nucleotide-binding protein alpha-2 subunit (384 aa).

The segment at 1–23 is disordered; sequence MGLVCSRNRRYRDSDPEENAQAA. Glycine 2 carries the N-myristoyl glycine lipid modification. A lipid anchor (S-palmitoyl cysteine) is attached at cysteine 5. Residues 38 to 384 enclose the G-alpha domain; sequence HIQKLLLLGA…RRNLFEAGLL (347 aa). Residues 41-54 form a G1 motif region; it reads KLLLLGAGESGKST. Residues glutamate 49, serine 50, glycine 51, lysine 52, serine 53, threonine 54, aspartate 163, leucine 188, tyrosine 189, threonine 194, glycine 222, asparagine 288, lysine 289, aspartate 291, and alanine 356 each coordinate GTP. Serine 53 is a Mg(2+) binding site. Residues 186-194 are G2 motif; sequence DVLYARVRT. Position 194 (threonine 194) interacts with Mg(2+). The tract at residues 215 to 224 is G3 motif; sequence YRLFDVGGQR. Residues 284 to 291 form a G4 motif region; sequence MLFLNKFD. Residues 354 to 359 are G5 motif; the sequence is TTALDQ.

It belongs to the G-alpha family. G proteins are composed of 3 units; alpha, beta and gamma. The alpha chain contains the guanine nucleotide binding site. Requires Mg(2+) as cofactor.

Guanine nucleotide-binding proteins (G proteins) are involved as modulators or transducers in various transmembrane signaling systems. In Pisum sativum (Garden pea), this protein is Guanine nucleotide-binding protein alpha-2 subunit (GPA2).